A 234-amino-acid chain; its full sequence is Uridylate kinase (234 aa).

Residue 9-12 (KLSG) coordinates ATP. A UMP-binding site is contributed by G51. Positions 52 and 56 each coordinate ATP. UMP contacts are provided by residues D71 and 132-139 (CGNPFFTT). Residues T159, Y165, and D168 each coordinate ATP.

It belongs to the UMP kinase family. Homohexamer.

Its subcellular location is the cytoplasm. It carries out the reaction UMP + ATP = UDP + ADP. It functions in the pathway pyrimidine metabolism; CTP biosynthesis via de novo pathway; UDP from UMP (UMPK route): step 1/1. With respect to regulation, inhibited by UTP. Functionally, catalyzes the reversible phosphorylation of UMP to UDP. This Prochlorococcus marinus (strain MIT 9301) protein is Uridylate kinase.